Here is a 314-residue protein sequence, read N- to C-terminus: L-lactate dehydrogenase (314 aa).

NAD(+)-binding positions include Val-17, Asp-38, Lys-43, Tyr-69, and 83-84; that span reads GA. Residues Gln-86 and Arg-92 each coordinate substrate. Residues Ser-105, 122 to 124, and Ser-147 each bind NAD(+); that span reads ASN. 124 to 127 lines the substrate pocket; that stretch reads NPVD. 152–155 lines the substrate pocket; the sequence is DSAR. Beta-D-fructose 1,6-bisphosphate contacts are provided by Arg-157 and His-172. His-179 (proton acceptor) is an active-site residue. Phosphotyrosine is present on Tyr-223. Residue Thr-232 coordinates substrate.

This sequence belongs to the LDH/MDH superfamily. LDH family. In terms of assembly, homotetramer.

Its subcellular location is the cytoplasm. It catalyses the reaction (S)-lactate + NAD(+) = pyruvate + NADH + H(+). It participates in fermentation; pyruvate fermentation to lactate; (S)-lactate from pyruvate: step 1/1. Its activity is regulated as follows. Allosterically activated by fructose 1,6-bisphosphate (FBP). Functionally, catalyzes the conversion of lactate to pyruvate. The protein is L-lactate dehydrogenase of Corynebacterium glutamicum (strain ATCC 13032 / DSM 20300 / JCM 1318 / BCRC 11384 / CCUG 27702 / LMG 3730 / NBRC 12168 / NCIMB 10025 / NRRL B-2784 / 534).